The sequence spans 257 residues: Homeobox protein goosecoid (257 aa).

The segment at residues 160–219 (KRRHRTIFTDEQLEALENLFQETKYPDVGTREQLARKVHLREEKVEVWFKNRRAKWRRQK) is a DNA-binding region (homeobox). A disordered region spans residues 213–257 (AKWRRQKRSSSEESENAEKWNKTSSSKASPEKREEEGKSDLDSDS). Basic and acidic residues predominate over residues 241–257 (SPEKREEEGKSDLDSDS).

This sequence belongs to the paired homeobox family. Bicoid subfamily.

Its subcellular location is the nucleus. Its function is as follows. Regulates chordin (CHRD). May play a role in spatial programing within discrete embryonic fields or lineage compartments during organogenesis. In concert with NKX3-2, plays a role in defining the structural components of the middle ear; required for the development of the entire tympanic ring. Probably involved in the regulatory networks that define neural crest cell fate specification and determine mesoderm cell lineages in mammals. This chain is Homeobox protein goosecoid (GSC), found in Homo sapiens (Human).